The primary structure comprises 348 residues: Holliday junction branch migration complex subunit RuvB (348 aa).

Residues Ala-4–Tyr-184 are large ATPase domain (RuvB-L). Residues Ile-23, Arg-24, Gly-65, Lys-68, Thr-69, Thr-70, Glu-131–Phe-133, Arg-174, Tyr-184, and Arg-221 each bind ATP. Thr-69 is a Mg(2+) binding site. The interval Ser-185 to Asp-255 is small ATPAse domain (RuvB-S). The segment at Glu-258–Glu-348 is head domain (RuvB-H). Residues Arg-294, Arg-313, and Arg-318 each coordinate DNA.

Belongs to the RuvB family. In terms of assembly, homohexamer. Forms an RuvA(8)-RuvB(12)-Holliday junction (HJ) complex. HJ DNA is sandwiched between 2 RuvA tetramers; dsDNA enters through RuvA and exits via RuvB. An RuvB hexamer assembles on each DNA strand where it exits the tetramer. Each RuvB hexamer is contacted by two RuvA subunits (via domain III) on 2 adjacent RuvB subunits; this complex drives branch migration. In the full resolvosome a probable DNA-RuvA(4)-RuvB(12)-RuvC(2) complex forms which resolves the HJ.

The protein localises to the cytoplasm. It catalyses the reaction ATP + H2O = ADP + phosphate + H(+). The RuvA-RuvB-RuvC complex processes Holliday junction (HJ) DNA during genetic recombination and DNA repair, while the RuvA-RuvB complex plays an important role in the rescue of blocked DNA replication forks via replication fork reversal (RFR). RuvA specifically binds to HJ cruciform DNA, conferring on it an open structure. The RuvB hexamer acts as an ATP-dependent pump, pulling dsDNA into and through the RuvAB complex. RuvB forms 2 homohexamers on either side of HJ DNA bound by 1 or 2 RuvA tetramers; 4 subunits per hexamer contact DNA at a time. Coordinated motions by a converter formed by DNA-disengaged RuvB subunits stimulates ATP hydrolysis and nucleotide exchange. Immobilization of the converter enables RuvB to convert the ATP-contained energy into a lever motion, pulling 2 nucleotides of DNA out of the RuvA tetramer per ATP hydrolyzed, thus driving DNA branch migration. The RuvB motors rotate together with the DNA substrate, which together with the progressing nucleotide cycle form the mechanistic basis for DNA recombination by continuous HJ branch migration. Branch migration allows RuvC to scan DNA until it finds its consensus sequence, where it cleaves and resolves cruciform DNA. This chain is Holliday junction branch migration complex subunit RuvB, found in Pseudomonas putida (strain GB-1).